The following is a 361-amino-acid chain: Septin-1 (361 aa).

The Septin-type G domain maps to 32 to 304 (KGFEFTLMVV…ENYRSDRLAK (273 aa)). Residues 42–49 (GESGLGKS) are G1 motif. GTP is bound by residues 42-49 (GESGLGKS), threonine 76, glycine 102, 181-189 (KADCLTKKE), glycine 239, and arginine 254. Residues 99 to 102 (DTPG) are G3 motif. Positions 180-183 (AKAD) are G4 motif. Phosphoserine is present on serine 319.

Belongs to the TRAFAC class TrmE-Era-EngA-EngB-Septin-like GTPase superfamily. Septin GTPase family. As to quaternary structure, likely part of a multicomponent septin complex that includes pnut. Interacts with pnut. Interacts with park. In terms of processing, ubiquitinated by park, leading to its degradation by the proteasome. Accumulates at the leading edge of the cleavage furrow in dividing cells and cellularizing embryos (at protein level). Also accumulates at the leading edge of the embryo epithelium during dorsal closure, in the embryonic neurons, and at the baso-lateral surfaces of ovarian follicle cells (at protein level).

The protein resides in the cytoplasm. Involved in cytokinesis. May be involved in p53-dependent apoptosis. This Drosophila melanogaster (Fruit fly) protein is Septin-1.